The following is a 77-amino-acid chain: MARVCQVTGKAPMSGNNVSHANNKTKRRFLPNLQNRRFWVESENRWVRLRVSNAGLRLIDKNGIDSVLADLRARGEA.

The tract at residues 1-25 (MARVCQVTGKAPMSGNNVSHANNKT) is disordered.

Belongs to the bacterial ribosomal protein bL28 family.

The sequence is that of Large ribosomal subunit protein bL28 from Paraburkholderia phymatum (strain DSM 17167 / CIP 108236 / LMG 21445 / STM815) (Burkholderia phymatum).